A 285-amino-acid chain; its full sequence is Complement C1q tumor necrosis factor-related protein 2 (285 aa).

The signal sequence occupies residues 1 to 15 (MIPWVLLACALPCAA). The disordered stretch occupies residues 33–144 (QLVCSLPGPQ…PGLPGPCSCG (112 aa)). Residues 40 to 141 (GPQGPPGPPG…KGEPGLPGPC (102 aa)) form the Collagen-like domain. Residues 41–51 (PQGPPGPPGAP) are compositionally biased toward pro residues. The segment covering 53–65 (PSGMMGRMGFPGK) has biased composition (low complexity). The segment covering 66 to 78 (DGQDGHDGDRGDS) has biased composition (basic and acidic residues). The segment covering 84-120 (PGRTGNRGKPGPKGKAGAIGRAGPRGPKGVNGTPGKH) has biased composition (low complexity). One can recognise a C1q domain in the interval 145 to 281 (SGHTKSAFSV…GFLIYADQDD (137 aa)).

May interact with ERFE. Expressed in adipose tissue.

The protein resides in the secreted. In terms of biological role, involved in the regulation of lipid metabolism in adipose tissue and liver. This Homo sapiens (Human) protein is Complement C1q tumor necrosis factor-related protein 2 (C1QTNF2).